A 303-amino-acid chain; its full sequence is Hemolysin E, chromosomal (303 aa).

Residues cysteine 87 and cysteine 285 are joined by a disulfide bond. Residues 183 to 203 (AGVVAGPFGLIISYSIAAGVV) form a helical membrane-spanning segment.

In terms of assembly, monomer and oligomer. In periplasm, it is present as a monomer, while in outer membrane vesicles, it oligomerizes to form a pore structure that is active. The pore is formed by a dodecamer. In periplasm, it forms a disulfide bond between Cys-87 and Cys-285, which prevents the oligomerization. In outer membrane vesicles, the redox status prevents formation of the disulfide bond, leading to oligomerization and pore formation.

It is found in the secreted. The protein localises to the periplasm. The protein resides in the host cell membrane. Its function is as follows. Toxin, which has some hemolytic activity towards mammalian cells. Acts by forming a pore-like structure upon contact with mammalian cells. The protein is Hemolysin E, chromosomal (hlyE) of Escherichia coli (strain K12).